Reading from the N-terminus, the 95-residue chain is Cell division topological specificity factor (95 aa).

It belongs to the MinE family.

Prevents the cell division inhibition by proteins MinC and MinD at internal division sites while permitting inhibition at polar sites. This ensures cell division at the proper site by restricting the formation of a division septum at the midpoint of the long axis of the cell. This chain is Cell division topological specificity factor, found in Synechococcus sp. (strain CC9902).